We begin with the raw amino-acid sequence, 573 residues long: Cytosolic 5'-nucleotidase 1B (573 aa).

The segment covering 1 to 11 has biased composition (basic residues); sequence MSQTSLKHKKK. Disordered stretches follow at residues 1 to 200 and 218 to 238; these read MSQT…PPTE and EPEY…EEDE. Residues 12-35 show a composition bias toward basic and acidic residues; the sequence is NEPGMRYSKESLDAEKRKDSDKTG. Over residues 60–73 the composition is skewed to polar residues; that stretch reads NQWSRTSRSPSTGA. The segment covering 93 to 105 has biased composition (low complexity); sequence SSTTSRTSSASPS. Residues 115–136 show a composition bias toward polar residues; sequence TSEKSSIQQTPQNRPITQLESQ. Composition is skewed to basic and acidic residues over residues 161-174 and 182-194; these read WAHR…DLQL and DSRE…REYP. Asp-428 acts as the Nucleophile in catalysis.

The protein belongs to the 5'-nucleotidase type 3 family. It depends on Mg(2+) as a cofactor. In terms of tissue distribution, expressed at highest levels in testis. Also expressed in brain, skeletal muscle, kidney and heart.

The protein localises to the cytoplasm. It catalyses the reaction a ribonucleoside 5'-phosphate + H2O = a ribonucleoside + phosphate. The catalysed reaction is AMP + H2O = adenosine + phosphate. Activated by ADP. Functionally, catalyzes the hydrolysis of nucleotide monophosphates, releasing inorganic phosphate and the corresponding nucleoside, AMP is the major substrate. The polypeptide is Cytosolic 5'-nucleotidase 1B (Nt5c1b) (Mus musculus (Mouse)).